An 85-amino-acid chain; its full sequence is Small ribosomal subunit protein uS17 (85 aa).

The protein belongs to the universal ribosomal protein uS17 family. In terms of assembly, part of the 30S ribosomal subunit.

Its function is as follows. One of the primary rRNA binding proteins, it binds specifically to the 5'-end of 16S ribosomal RNA. The protein is Small ribosomal subunit protein uS17 of Mesoplasma florum (strain ATCC 33453 / NBRC 100688 / NCTC 11704 / L1) (Acholeplasma florum).